A 321-amino-acid polypeptide reads, in one-letter code: Malate dehydrogenase (321 aa).

NAD(+)-binding positions include 10–15 and Asp-34; that span reads GGGQIG. Positions 83 and 89 each coordinate substrate. Residues Asn-96 and 119–121 contribute to the NAD(+) site; that span reads ISN. Residues Asn-121 and Arg-152 each contribute to the substrate site. His-176 (proton acceptor) is an active-site residue.

This sequence belongs to the LDH/MDH superfamily. MDH type 3 family.

The catalysed reaction is (S)-malate + NAD(+) = oxaloacetate + NADH + H(+). Its function is as follows. Catalyzes the reversible oxidation of malate to oxaloacetate. This chain is Malate dehydrogenase, found in Trichlorobacter lovleyi (strain ATCC BAA-1151 / DSM 17278 / SZ) (Geobacter lovleyi).